Reading from the N-terminus, the 603-residue chain is MTMYATMTTLALTSLIPPILTTFINPNKKSSYPHYVKSIVASTFIISLFPTTMFLCLDQEAIISSWHWATTQTIQLSLSFKLDYFSMMFIPVALFVTWSIMEFSLWYMNSDPNINQFFKYLLIFLITMLILVTANNLFQLFIGWEGVGIMSFLLIGWWYARTDANTAAVQAILYNRIGDIGFILALAWFLLHSNSWDPQQMSLLNTNPNLIPLLGFLLAAAGKSAQLGLHPWLPSAMEGPTPVSALLHSSTMVVAGVFLLIRFRHLAENNSLAQTLTLCLGAITTLFAAVCALTQNDIKKIVAFSTSSQLGLMVATIGIGQPHLAFLHICTHAFFKAMLFMCSGSIIHNLNNEQDIRKMGGLLKAMPLTSTSLAIGSLALMGMPFLTGFYSKDLIIETANMSHTNAWALSIILIATSLTSAYSTRMILLTLTGQPRFPTFANINENYSTLLNPIKRLTIGSLFAGFFITNNILPTSVPQMTIPLYLKLTALSITLLGLLTALDLNYLTNKLKMKHPPHTFYFSNMLGFYPNITHRTIPYLGLLMSQNLPLLLLDLIWLEKLLPKTISQHQISASITTSTQKGLIKLYFLSFFFPLLLILLLIT.

The next 17 helical transmembrane spans lie at 4–24 (YATMTTLALTSLIPPILTTFI), 38–58 (SIVASTFIISLFPTTMFLCLD), 87–107 (MMFIPVALFVTWSIMEFSLWY), 114–134 (INQFFKYLLIFLITMLILVTA), 140–160 (LFIGWEGVGIMSFLLIGWWYA), 171–191 (AILYNRIGDIGFILALAWFLL), 210–230 (LIPLLGFLLAAAGKSAQLGLH), 241–261 (TPVSALLHSSTMVVAGVFLLI), 272–292 (LAQTLTLCLGAITTLFAAVCA), 301–320 (IVAFSTSSQLGLMVATIGIG), 325–347 (AFLHICTHAFFKAMLFMCSGSII), 370–390 (STSLAIGSLALMGMPFLTGFY), 407–429 (WALSIILIATSLTSAYSTRMILL), 457–477 (LTIGSLFAGFFITNNILPTSV), 482–502 (IPLYLKLTALSITLLGLLTAL), 537–557 (IPYLGLLMSQNLPLLLLDLIW), and 582–602 (GLIKLYFLSFFFPLLLILLLI).

Belongs to the complex I subunit 5 family. In terms of assembly, core subunit of respiratory chain NADH dehydrogenase (Complex I) which is composed of 45 different subunits.

The protein resides in the mitochondrion inner membrane. It catalyses the reaction a ubiquinone + NADH + 5 H(+)(in) = a ubiquinol + NAD(+) + 4 H(+)(out). Functionally, core subunit of the mitochondrial membrane respiratory chain NADH dehydrogenase (Complex I) which catalyzes electron transfer from NADH through the respiratory chain, using ubiquinone as an electron acceptor. Essential for the catalytic activity and assembly of complex I. This Gorilla gorilla gorilla (Western lowland gorilla) protein is NADH-ubiquinone oxidoreductase chain 5 (MT-ND5).